An 87-amino-acid polypeptide reads, in one-letter code: Small ribosomal subunit protein bS20 (87 aa).

The segment at 1 to 22 is disordered; that stretch reads MANSAGSKKRARQAVKSRAHNG. Basic residues predominate over residues 7-19; sequence SKKRARQAVKSRA.

It belongs to the bacterial ribosomal protein bS20 family.

In terms of biological role, binds directly to 16S ribosomal RNA. In Marinomonas sp. (strain MWYL1), this protein is Small ribosomal subunit protein bS20.